Reading from the N-terminus, the 325-residue chain is Replication factor C small subunit (325 aa).

An ATP-binding site is contributed by 45-52 (GPPGTGKT).

This sequence belongs to the activator 1 small subunits family. RfcS subfamily. As to quaternary structure, heteromultimer composed of small subunits (RfcS) and large subunits (RfcL).

In terms of biological role, part of the RFC clamp loader complex which loads the PCNA sliding clamp onto DNA. The protein is Replication factor C small subunit of Sulfolobus acidocaldarius (strain ATCC 33909 / DSM 639 / JCM 8929 / NBRC 15157 / NCIMB 11770).